Reading from the N-terminus, the 749-residue chain is Amyloid-beta A4 precursor protein-binding family A member 2 (749 aa).

Disordered regions lie at residues 1 to 94, 130 to 220, and 238 to 344; these read MAHR…PEEE, DTDE…GDLE, and SMTS…NIPE. Ser-11 carries the post-translational modification Phosphoserine. Positions 70-80 are enriched in polar residues; the sequence is GDSSSDYVNNT. Composition is skewed to acidic residues over residues 81–94 and 131–142; these read SEEE…PEEE and TDECQEAVEEWT. The tract at residues 185-270 is STXBP1-binding; it reads HYCASKEGYQ…SVEACPPIKA (86 aa). Ser-208 is subject to Phosphoserine. The span at 238 to 247 shows a compositional bias: polar residues; the sequence is SMTSITSASE. Residues 305–315 are compositionally biased toward basic and acidic residues; the sequence is RTPEERLKWPH. The PID domain occupies 368–555; that stretch reads DGIIFAANYL…IINTQEMYND (188 aa). PDZ domains lie at 568 to 654 and 659 to 734; these read ELQL…IVSC and TVLI…TMPA.

In terms of assembly, part of a multimeric complex containing STXBP1 and syntaxin-1. Binds to the cytoplasmic domain of amyloid-beta protein, and to the nuclear factor NF-kappa-B/p65 via its PDZ domain. Interacts with the N-terminal domain of NECAB3. In terms of tissue distribution, brain.

In terms of biological role, putative function in synaptic vesicle exocytosis by binding to STXBP1, an essential component of the synaptic vesicle exocytotic machinery. May modulate processing of the amyloid-beta precursor protein (APP) and hence formation of APP-beta. The protein is Amyloid-beta A4 precursor protein-binding family A member 2 (APBA2) of Homo sapiens (Human).